The following is a 316-amino-acid chain: uncharacterized protein (316 aa).

BNR repeat units follow at residues 62 to 73, 124 to 135, 196 to 207, and 242 to 253; these read FISDSQGLKFSP, KISVDNGLTWSN, FISRDGGLTWRV, and YFSLDQGRTWNQ.

This is an uncharacterized protein from Saccharomyces cerevisiae (strain ATCC 204508 / S288c) (Baker's yeast).